The sequence spans 427 residues: UPF0229 protein YeaH (427 aa).

A compositionally biased stretch (basic and acidic residues) spans 79 to 90; that stretch reads NDHFVQNDRIER. The tract at residues 79-110 is disordered; sequence NDHFVQNDRIERPQGGGGGSGSGQGQASQDGE. A compositionally biased stretch (gly residues) spans 92–102; sequence QGGGGGSGSGQ.

Belongs to the UPF0229 family.

The sequence is that of UPF0229 protein YeaH from Escherichia coli O9:H4 (strain HS).